We begin with the raw amino-acid sequence, 445 residues long: Inositol-pentakisphosphate 2-kinase IPK1 (445 aa).

Residues Gly19–Asn22 and Arg40 contribute to the ATP site. Arg127 provides a ligand contact to substrate. Residues Ser144 to His146 and Glu162 to Lys164 contribute to the ATP site. The EXKPK motif motif lies at Glu162 to Lys166. Residues Lys166, Lys196, and Asn234 each contribute to the substrate site. Arg237 is an ATP binding site. The Zn(2+) site is built by His312, Cys322, Cys325, and His341. Asp363 is a binding site for substrate. Asp402 contributes to the ATP binding site. Substrate is bound by residues Lys406, Lys410, and Tyr414.

Belongs to the IPK1 type 2 family. Zn(2+) is required as a cofactor.

It carries out the reaction 1D-myo-inositol 1,3,4,5,6-pentakisphosphate + ATP = 1D-myo-inositol hexakisphosphate + ADP + H(+). Phosphorylates Ins(1,3,4,5,6)P5 at position 2 to form Ins(1,2,3,4,5,6)P6 (InsP6 or phytate). Phytate is a regulator of intracellular signaling, a highly abundant animal antinutrient, and a phosphate store in plant seeds. Also phosphorylates Ins(1,3,4,6)P4 and Ins(1,4,5,6)P4 to produce Ins(1,2,3,4,6)P5 and Ins(1,2,4,5,6)P5. The polypeptide is Inositol-pentakisphosphate 2-kinase IPK1 (Oryza sativa subsp. indica (Rice)).